We begin with the raw amino-acid sequence, 225 residues long: Ribonuclease 3 (225 aa).

The 123-residue stretch at 5 to 127 (IDKLERKLGY…IIGAIYLDSD (123 aa)) folds into the RNase III domain. A Mg(2+)-binding site is contributed by Glu40. Residue Asp44 is part of the active site. Asp113 and Glu116 together coordinate Mg(2+). Glu116 is an active-site residue. The 71-residue stretch at 154–224 (DPKTRLQEFL…AETALEQLTN (71 aa)) folds into the DRBM domain.

The protein belongs to the ribonuclease III family. Homodimer. The cofactor is Mg(2+).

The protein localises to the cytoplasm. It catalyses the reaction Endonucleolytic cleavage to 5'-phosphomonoester.. Digests double-stranded RNA. Involved in the processing of primary rRNA transcript to yield the immediate precursors to the large and small rRNAs (23S and 16S). Processes some mRNAs, and tRNAs when they are encoded in the rRNA operon. Processes pre-crRNA and tracrRNA of type II CRISPR loci if present in the organism. The chain is Ribonuclease 3 from Vibrio campbellii (strain ATCC BAA-1116).